The sequence spans 181 residues: Probable nicotinate-nucleotide adenylyltransferase (181 aa).

This sequence belongs to the NadD family.

The enzyme catalyses nicotinate beta-D-ribonucleotide + ATP + H(+) = deamido-NAD(+) + diphosphate. Its pathway is cofactor biosynthesis; NAD(+) biosynthesis; deamido-NAD(+) from nicotinate D-ribonucleotide: step 1/1. Catalyzes the reversible adenylation of nicotinate mononucleotide (NaMN) to nicotinic acid adenine dinucleotide (NaAD). This chain is Probable nicotinate-nucleotide adenylyltransferase, found in Campylobacter jejuni subsp. jejuni serotype O:23/36 (strain 81-176).